We begin with the raw amino-acid sequence, 71 residues long: Antimicrobial peptide VpCT4 (71 aa).

The signal sequence occupies residues 1–23 (MKTQFVILIVAIVILQLISQSEA). Position 39 is a leucine amide (L39). The propeptide occupies 40–71 (GKRGVQNMDQFDDIFEPELSEADLRYLQDLLR).

It belongs to the non-disulfide-bridged peptide (NDBP) superfamily. Short antimicrobial peptide (group 4) family. As to expression, expressed by the venom gland.

Its subcellular location is the secreted. It localises to the target cell membrane. In terms of biological role, antimicrobial peptide with potent activity against bacteria S.aureus (MIC=9.3 uM), weak activity against E.coli (MIC&gt;100 uM), and weak activity against pathogenic yeasts C.albicans (MIC=100 uM) and C.glabrata (MIC=100 uM). Is not very effective against P.aeruginosa (MIC&gt;300 uM). Also provokes high hemolysis on human erythrocytes (HC(50)=4.8 uM). The polypeptide is Antimicrobial peptide VpCT4 (Mesomexovis punctatus (Scorpion)).